The chain runs to 592 residues: Potassium-transporting ATPase potassium-binding subunit (592 aa).

Helical transmembrane passes span 6-26, 67-87, 136-156, 179-199, 283-303, 312-332, 359-379, 389-409, 411-431, 450-470, 489-511, 519-539, and 559-579; these read WLETILFFVVLLALIKPFGTY, ACAMLLFNLVFAVSLFAMLLL, GFAVHNFTSAATGIVIAIAAI, LYILLPLSLIAAIFLVSQGVI, LSNIFEVFLILLISGGLTYTF, QGWALLAVMLAILILAIGVFY, FGLAGSALFATATTGTSCGAV, IGGMVPLSLILLSEVIFGGVG, GLYTMLAFVVIAVFVAGLMIG, ITTVLASGILVLIFSGIAMIL, LYAFASMSNNNGSAFAGLNGNTL, VAMLLGRFVPAVAVLAMAGGL, and FALWLTLVILIVGALTFFPAL.

The protein belongs to the KdpA family. The system is composed of three essential subunits: KdpA, KdpB and KdpC.

The protein localises to the cell inner membrane. Its function is as follows. Part of the high-affinity ATP-driven potassium transport (or Kdp) system, which catalyzes the hydrolysis of ATP coupled with the electrogenic transport of potassium into the cytoplasm. This subunit binds the periplasmic potassium ions and delivers the ions to the membrane domain of KdpB through an intramembrane tunnel. This is Potassium-transporting ATPase potassium-binding subunit from Geotalea uraniireducens (strain Rf4) (Geobacter uraniireducens).